A 1034-amino-acid polypeptide reads, in one-letter code: Probable outer membrane protein PmpF (1034 aa).

The first 25 residues, 1–25 (MIKRTSLSFACLSFFYLSTISILQA), serve as a signal peptide directing secretion. Low complexity-rich tracts occupy residues 664–673 (SAPTSATSIA) and 680–709 (ETFT…ASNS). The disordered stretch occupies residues 664–709 (SAPTSATSIAEQKKTSETFTPSNTTTASIPNIKASAGSGSGSASNS). Residues 755–1034 (RSLLPDNSWF…YINAGGALVF (280 aa)) enclose the Autotransporter domain.

Belongs to the PMP outer membrane protein family.

The protein localises to the secreted. Its subcellular location is the cell wall. The protein resides in the cell outer membrane. This is Probable outer membrane protein PmpF (pmpF) from Chlamydia trachomatis serovar D (strain ATCC VR-885 / DSM 19411 / UW-3/Cx).